The primary structure comprises 302 residues: Proteasome subunit beta (302 aa).

A compositionally biased stretch (basic and acidic residues) spans 1–10 (MAGRVREVSH). Residues 1-21 (MAGRVREVSHSSDQSGRLPAA) are disordered. The propeptide at 1-67 (MAGRVREVSH…GPGAGEPPHA (67 aa)) is removed in mature form; by autocatalysis. Threonine 68 acts as the Nucleophile in catalysis. The segment at 283 to 302 (RRGNPGGNPGISAVHGDGGN) is disordered.

It belongs to the peptidase T1B family. The 20S proteasome core is composed of 14 alpha and 14 beta subunits that assemble into four stacked heptameric rings, resulting in a barrel-shaped structure. The two inner rings, each composed of seven catalytic beta subunits, are sandwiched by two outer rings, each composed of seven alpha subunits. The catalytic chamber with the active sites is on the inside of the barrel. Has a gated structure, the ends of the cylinder being occluded by the N-termini of the alpha-subunits. Is capped by the proteasome-associated ATPase, ARC.

The protein resides in the cytoplasm. It carries out the reaction Cleavage of peptide bonds with very broad specificity.. It functions in the pathway protein degradation; proteasomal Pup-dependent pathway. Its activity is regulated as follows. The formation of the proteasomal ATPase ARC-20S proteasome complex, likely via the docking of the C-termini of ARC into the intersubunit pockets in the alpha-rings, may trigger opening of the gate for substrate entry. Interconversion between the open-gate and close-gate conformations leads to a dynamic regulation of the 20S proteasome proteolysis activity. Component of the proteasome core, a large protease complex with broad specificity involved in protein degradation. The sequence is that of Proteasome subunit beta from Kineococcus radiotolerans (strain ATCC BAA-149 / DSM 14245 / SRS30216).